The following is a 136-amino-acid chain: Large ribosomal subunit protein uL16 (136 aa).

It belongs to the universal ribosomal protein uL16 family. In terms of assembly, part of the 50S ribosomal subunit.

Functionally, binds 23S rRNA and is also seen to make contacts with the A and possibly P site tRNAs. The sequence is that of Large ribosomal subunit protein uL16 from Rickettsia prowazekii (strain Madrid E).